Here is a 148-residue protein sequence, read N- to C-terminus: Flavodoxin (148 aa).

The region spanning 4–145 is the Flavodoxin-like domain; that stretch reads VLILFGSSTG…AVSAFAEDVL (142 aa).

It belongs to the flavodoxin family. FMN serves as cofactor.

Functionally, low-potential electron donor to a number of redox enzymes. This Desulfovibrio desulfuricans (strain ATCC 27774 / DSM 6949 / MB) protein is Flavodoxin.